Consider the following 124-residue polypeptide: Small ribosomal subunit protein bS6 (124 aa).

The protein belongs to the bacterial ribosomal protein bS6 family.

Binds together with bS18 to 16S ribosomal RNA. This chain is Small ribosomal subunit protein bS6, found in Haemophilus ducreyi (strain 35000HP / ATCC 700724).